A 274-amino-acid chain; its full sequence is Phosphatidylglycerol--prolipoprotein diacylglyceryl transferase (274 aa).

7 helical membrane passes run 22-42, 61-81, 96-116, 125-145, 177-197, 204-224, and 238-258; these read LSVR…MWLA, LLFY…VLFY, IWTG…AMVW, FFTV…VGRI, SQLY…NLFW, GAIS…VEFV, and ISMG…MIWV. A 1,2-diacyl-sn-glycero-3-phospho-(1'-sn-glycerol) is bound at residue Arg-144.

This sequence belongs to the Lgt family.

The protein resides in the cell inner membrane. It carries out the reaction L-cysteinyl-[prolipoprotein] + a 1,2-diacyl-sn-glycero-3-phospho-(1'-sn-glycerol) = an S-1,2-diacyl-sn-glyceryl-L-cysteinyl-[prolipoprotein] + sn-glycerol 1-phosphate + H(+). It participates in protein modification; lipoprotein biosynthesis (diacylglyceryl transfer). In terms of biological role, catalyzes the transfer of the diacylglyceryl group from phosphatidylglycerol to the sulfhydryl group of the N-terminal cysteine of a prolipoprotein, the first step in the formation of mature lipoproteins. The chain is Phosphatidylglycerol--prolipoprotein diacylglyceryl transferase from Aeromonas hydrophila subsp. hydrophila (strain ATCC 7966 / DSM 30187 / BCRC 13018 / CCUG 14551 / JCM 1027 / KCTC 2358 / NCIMB 9240 / NCTC 8049).